Here is a 153-residue protein sequence, read N- to C-terminus: ATP synthase subunit b' (153 aa).

A helical transmembrane segment spans residues 23 to 40; it reads LMAIQVVALTYILNSLFF.

It belongs to the ATPase B chain family. As to quaternary structure, F-type ATPases have 2 components, F(1) - the catalytic core - and F(0) - the membrane proton channel. F(1) has five subunits: alpha(3), beta(3), gamma(1), delta(1), epsilon(1). F(0) has four main subunits: a(1), b(1), b'(1) and c(10-14). The alpha and beta chains form an alternating ring which encloses part of the gamma chain. F(1) is attached to F(0) by a central stalk formed by the gamma and epsilon chains, while a peripheral stalk is formed by the delta, b and b' chains.

The protein resides in the cellular thylakoid membrane. Functionally, f(1)F(0) ATP synthase produces ATP from ADP in the presence of a proton or sodium gradient. F-type ATPases consist of two structural domains, F(1) containing the extramembraneous catalytic core and F(0) containing the membrane proton channel, linked together by a central stalk and a peripheral stalk. During catalysis, ATP synthesis in the catalytic domain of F(1) is coupled via a rotary mechanism of the central stalk subunits to proton translocation. Component of the F(0) channel, it forms part of the peripheral stalk, linking F(1) to F(0). The b'-subunit is a diverged and duplicated form of b found in plants and photosynthetic bacteria. The polypeptide is ATP synthase subunit b' (Prochlorococcus marinus (strain MIT 9515)).